Here is a 550-residue protein sequence, read N- to C-terminus: Glucose-6-phosphate isomerase (550 aa).

Glu-355 (proton donor) is an active-site residue. Active-site residues include His-386 and Lys-512.

Belongs to the GPI family.

The protein localises to the cytoplasm. It catalyses the reaction alpha-D-glucose 6-phosphate = beta-D-fructose 6-phosphate. It functions in the pathway carbohydrate biosynthesis; gluconeogenesis. It participates in carbohydrate degradation; glycolysis; D-glyceraldehyde 3-phosphate and glycerone phosphate from D-glucose: step 2/4. Functionally, catalyzes the reversible isomerization of glucose-6-phosphate to fructose-6-phosphate. This Rhodococcus opacus (strain B4) protein is Glucose-6-phosphate isomerase.